Here is a 937-residue protein sequence, read N- to C-terminus: Bifunctional glutamine synthetase adenylyltransferase/adenylyl-removing enzyme (937 aa).

The interval Met-1–Pro-436 is adenylyl removase. An adenylyl transferase region spans residues Pro-443–Ala-937.

Belongs to the GlnE family. Requires Mg(2+) as cofactor.

It carries out the reaction [glutamine synthetase]-O(4)-(5'-adenylyl)-L-tyrosine + phosphate = [glutamine synthetase]-L-tyrosine + ADP. It catalyses the reaction [glutamine synthetase]-L-tyrosine + ATP = [glutamine synthetase]-O(4)-(5'-adenylyl)-L-tyrosine + diphosphate. In terms of biological role, involved in the regulation of glutamine synthetase GlnA, a key enzyme in the process to assimilate ammonia. When cellular nitrogen levels are high, the C-terminal adenylyl transferase (AT) inactivates GlnA by covalent transfer of an adenylyl group from ATP to specific tyrosine residue of GlnA, thus reducing its activity. Conversely, when nitrogen levels are low, the N-terminal adenylyl removase (AR) activates GlnA by removing the adenylyl group by phosphorolysis, increasing its activity. The regulatory region of GlnE binds the signal transduction protein PII (GlnB) which indicates the nitrogen status of the cell. This Xanthomonas campestris pv. campestris (strain ATCC 33913 / DSM 3586 / NCPPB 528 / LMG 568 / P 25) protein is Bifunctional glutamine synthetase adenylyltransferase/adenylyl-removing enzyme.